The following is a 604-amino-acid chain: Membrane protein insertase YidC (604 aa).

The helical transmembrane segment at 8–28 (LYLAIGLSLLVLIGWNYFFAG) threads the bilayer. The segment at 42-84 (EQQAQTQTTSDTTARSDLNVPGQRSLPGESPQTQLSRPEALAA) is disordered. Low complexity predominate over residues 43 to 58 (QQAQTQTTSDTTARSD). The next 5 membrane-spanning stretches (helical) occupy residues 349 to 369 (FDLLIDWGYFYFITRPMFWIL), 375 to 395 (VVGNFGVAILCITVLVKAVFF), 449 to 469 (LPMLIQIPVFFALYKVLFVTI), 507 to 527 (MIGHFLAIGIWPLIMGVSMFF), and 546 to 566 (WMPVIFTFMLGTFPSGLVIYW).

The protein belongs to the OXA1/ALB3/YidC family. Type 1 subfamily. In terms of assembly, interacts with the Sec translocase complex via SecD. Specifically interacts with transmembrane segments of nascent integral membrane proteins during membrane integration.

The protein resides in the cell inner membrane. Its function is as follows. Required for the insertion and/or proper folding and/or complex formation of integral membrane proteins into the membrane. Involved in integration of membrane proteins that insert both dependently and independently of the Sec translocase complex, as well as at least some lipoproteins. Aids folding of multispanning membrane proteins. The polypeptide is Membrane protein insertase YidC (Beijerinckia indica subsp. indica (strain ATCC 9039 / DSM 1715 / NCIMB 8712)).